The following is a 316-amino-acid chain: Apolipoprotein E (316 aa).

The first 18 residues, 1–18, serve as a signal peptide directing secretion; the sequence is MKVLWVALVVALLAGCQA. Repeat copies occupy residues 79–100, 101–122, 123–144, 145–166, 167–188, 189–210, 211–232, and 233–254. Residues 79-254 are 8 X 22 AA approximate tandem repeats; the sequence is VLMEETMKEV…RLDKMRQQLE (176 aa). Met142 carries the post-translational modification Methionine sulfoxide. A Phosphoserine modification is found at Ser146. Positions 157 to 167 are LDL and other lipoprotein receptors binding; it reads HLRKLRKRLLR. 161–164 lines the heparin pocket; that stretch reads LRKR. The tract at residues 209 to 289 is lipid-binding and lipoprotein association; that stretch reads AATLSTQVGQ…SWFEPLVEDM (81 aa). Heparin is bound at residue 228 to 235; the sequence is RQKLHGRL. Residues 265 to 316 are homooligomerization; the sequence is SQIRLQAEAFQARLRSWFEPLVEDMQRQWAGLVEKVQLALHLSPTSPPSENH. The segment at 277 to 289 is specificity for association with VLDL; sequence RLRSWFEPLVEDM.

This sequence belongs to the apolipoprotein A1/A4/E family. Homotetramer. May interact with ABCA1; functionally associated with ABCA1 in the biogenesis of HDLs. May interact with APP/A4 amyloid-beta peptide; the interaction is extremely stable in vitro but its physiological significance is unclear. May interact with MAPT. May interact with MAP2. In the cerebrospinal fluid, interacts with secreted SORL1. Interacts with PMEL; this allows the loading of PMEL luminal fragment on ILVs to induce fibril nucleation. Post-translationally, APOE exists as multiple glycosylated and sialylated glycoforms within cells and in plasma. The extent of glycosylation and sialylation are tissue and context specific. Glycated in plasma VLDL. In terms of processing, phosphorylated by FAM20C in the extracellular medium.

It localises to the secreted. The protein resides in the extracellular space. The protein localises to the extracellular matrix. It is found in the extracellular vesicle. Its subcellular location is the endosome. It localises to the multivesicular body. APOE is an apolipoprotein, a protein associating with lipid particles, that mainly functions in lipoprotein-mediated lipid transport between organs via the plasma and interstitial fluids. APOE is a core component of plasma lipoproteins and is involved in their production, conversion and clearance. Apolipoproteins are amphipathic molecules that interact both with lipids of the lipoprotein particle core and the aqueous environment of the plasma. As such, APOE associates with chylomicrons, chylomicron remnants, very low density lipoproteins (VLDL) and intermediate density lipoproteins (IDL) but shows a preferential binding to high-density lipoproteins (HDL). It also binds a wide range of cellular receptors including the LDL receptor/LDLR and the very low-density lipoprotein receptor/VLDLR that mediate the cellular uptake of the APOE-containing lipoprotein particles. Finally, APOE also has a heparin-binding activity and binds heparan-sulfate proteoglycans on the surface of cells, a property that supports the capture and the receptor-mediated uptake of APOE-containing lipoproteins by cells. The protein is Apolipoprotein E (APOE) of Ovis aries (Sheep).